The sequence spans 332 residues: Ornithine carbamoyltransferase 1, catabolic (332 aa).

Residues 56 to 59, Gln83, Arg107, and 134 to 137 contribute to the carbamoyl phosphate site; these read STRT and HPTQ. Residues Asn167, Asp231, and 235 to 236 contribute to the L-ornithine site; that span reads SM. Carbamoyl phosphate-binding positions include 273–274 and Arg318; that span reads CL.

This sequence belongs to the aspartate/ornithine carbamoyltransferase superfamily. OTCase family.

It localises to the cytoplasm. It catalyses the reaction carbamoyl phosphate + L-ornithine = L-citrulline + phosphate + H(+). It functions in the pathway amino-acid degradation; L-arginine degradation via ADI pathway; carbamoyl phosphate from L-arginine: step 2/2. Functionally, reversibly catalyzes the transfer of the carbamoyl group from carbamoyl phosphate (CP) to the N(epsilon) atom of ornithine (ORN) to produce L-citrulline. In Staphylococcus epidermidis (strain ATCC 12228 / FDA PCI 1200), this protein is Ornithine carbamoyltransferase 1, catabolic (arcB1).